The chain runs to 229 residues: Ribonuclease 3 (229 aa).

In terms of domain architecture, RNase III spans 5 to 127 (LSRLERQLGY…LIGAIYLDAG (123 aa)). Residue Glu40 participates in Mg(2+) binding. Residue Asp44 is part of the active site. 2 residues coordinate Mg(2+): Asp113 and Glu116. The active site involves Glu116. A DRBM domain is found at 154-224 (DPKTRLQEFL…AAAALIALGV (71 aa)).

It belongs to the ribonuclease III family. As to quaternary structure, homodimer. It depends on Mg(2+) as a cofactor.

The protein localises to the cytoplasm. It carries out the reaction Endonucleolytic cleavage to 5'-phosphomonoester.. In terms of biological role, digests double-stranded RNA. Involved in the processing of primary rRNA transcript to yield the immediate precursors to the large and small rRNAs (23S and 16S). Processes some mRNAs, and tRNAs when they are encoded in the rRNA operon. Processes pre-crRNA and tracrRNA of type II CRISPR loci if present in the organism. The sequence is that of Ribonuclease 3 from Pseudomonas syringae pv. syringae (strain B728a).